The following is a 501-amino-acid chain: MWKLWRAEEGAAALGGALFLLLFALGVRQLLKQRRPMGFPPGPPGLPFIGNIYSLAASSELPHVYMRKQSQVYGEIFSLDLGGISTVVLNGYDVVKECLVHQSEIFADRPCLPLFMKMTKMGGLLNSRYGRGWVDHRRLAVNSFRYFGYGQKSFESKILEETKFFNDAIETYKGRPFDFKQLITNAVSNITNLIIFGERFTYEDTDFQHMIELFSENVELAASASVFLYNAFPWIGILPFGKHQQLFRNAAVVYDFLSRLIEKASVNRKPQLPQHFVDAYLDEMDQGKNDPSSTFSKENLIFSVGELIIAGTETTTNVLRWAILFMALYPNIQGQVQKEIDLIMGPNGKPSWDDKCKMPYTEAVLHEVLRFCNIVPLGIFHATSEDAVVRGYSIPKGTTVITNLYSVHFDEKYWRDPEVFHPERFLDSSGYFAKKEALVPFSLGRRHCLGEHLARMEMFLFFTALLQRFHLHFPHELVPDLKPRLGMTLQPQPYLICAERR.

An N-terminal signal peptide occupies residues M1–G26. A250 provides a ligand contact to substrate. C448 lines the heme pocket.

This sequence belongs to the cytochrome P450 family. In terms of assembly, homodimer. Requires heme as cofactor.

Its subcellular location is the endoplasmic reticulum membrane. The protein resides in the microsome membrane. It carries out the reaction calciol + reduced [NADPH--hemoprotein reductase] + O2 = calcidiol + oxidized [NADPH--hemoprotein reductase] + H2O + H(+). It catalyses the reaction vitamin D2 + reduced [NADPH--hemoprotein reductase] + O2 = 25-hydroxyvitamin D2 + oxidized [NADPH--hemoprotein reductase] + H2O + H(+). The catalysed reaction is 1alpha-hydroxyvitamin D2 + reduced [NADPH--hemoprotein reductase] + O2 = 1alpha,25-dihydroxyvitamin D2 + oxidized [NADPH--hemoprotein reductase] + H2O + H(+). The enzyme catalyses alfacalcidol + reduced [NADPH--hemoprotein reductase] + O2 = calcitriol + oxidized [NADPH--hemoprotein reductase] + H2O + H(+). Its pathway is hormone biosynthesis; vitamin D biosynthesis. In terms of biological role, a cytochrome P450 monooxygenase involved in activation of vitamin D precursors. Catalyzes hydroxylation at C-25 of both forms of vitamin D, vitamin D(2) and D(3) (calciol). Can metabolize vitamin D analogs/prodrugs 1alpha-hydroxyvitamin D(2) (doxercalciferol) and 1alpha-hydroxyvitamin D(3) (alfacalcidol) forming 25-hydroxy derivatives. Mechanistically, uses molecular oxygen inserting one oxygen atom into a substrate, and reducing the second into a water molecule, with two electrons provided by NADPH via cytochrome P450 reductase (CPR; NADPH-ferrihemoprotein reductase). In Homo sapiens (Human), this protein is Vitamin D 25-hydroxylase (CYP2R1).